A 477-amino-acid polypeptide reads, in one-letter code: UDP-N-acetylmuramoylalanine--D-glutamate ligase (477 aa).

127–133 lines the ATP pocket; it reads GTNGKTT.

The protein belongs to the MurCDEF family.

Its subcellular location is the cytoplasm. The catalysed reaction is UDP-N-acetyl-alpha-D-muramoyl-L-alanine + D-glutamate + ATP = UDP-N-acetyl-alpha-D-muramoyl-L-alanyl-D-glutamate + ADP + phosphate + H(+). It participates in cell wall biogenesis; peptidoglycan biosynthesis. In terms of biological role, cell wall formation. Catalyzes the addition of glutamate to the nucleotide precursor UDP-N-acetylmuramoyl-L-alanine (UMA). The polypeptide is UDP-N-acetylmuramoylalanine--D-glutamate ligase (Prochlorococcus marinus (strain MIT 9515)).